The chain runs to 256 residues: MKTYKGYLIDLDGTMYNGTEKIEEACEFVRTLKDRGVPYLFVTNNSSRTPKQVADKLVSFDIPATEEQVFTTSMATAQHIAQQKKDASVYVIGEEGIRQAIEENGLTFGGENADFVVVGIDRSITYEKFAVGCLAIRNGARFISTNGDIAIPTERGLLPGNGSLTSVLTVSTGVQPVFIGKPESIIMEQAMRVLGTDVSETLMVGDNYATDIMAGINAGMDTLLVHTGVTKREHMTDDMEKPTHAIDSLTEWIPYI.

It belongs to the HAD-like hydrolase superfamily. NagD family. In terms of assembly, homodimer. Mg(2+) serves as cofactor.

Its subcellular location is the cytoplasm. The enzyme catalyses a ribonucleoside 5'-phosphate + H2O = a ribonucleoside + phosphate. The catalysed reaction is XMP + H2O = xanthosine + phosphate. Its function is as follows. Catalyzes the hydrolysis of various purine and pyrimidine 5'-nucleotides, showing preference for 5'-nucleoside monophosphates and exhibiting the highest catalytic activity toward 5'-XMP. Also shows a relatively high phosphohydrolase activity toward the nucleotide precursors ribose-5-phosphate (R5P) and 5-phosphoribosyl-1-pyrophosphate (PRPP), and toward the non-natural substrate p-nitrophenyl phosphate (pNPP). This chain is 5'-nucleotidase YutF (yutF), found in Bacillus subtilis (strain 168).